The following is a 169-amino-acid chain: HTH-type transcriptional regulator PchR (169 aa).

Residues 10–153 enclose the HTH marR-type domain; it reads YDIYVRLLHL…VLKFLEQLTS (144 aa). Positions 64–87 form a DNA-binding region, H-T-H motif; sequence NAGIARKMNLSKANVTKISTKLIK.

Homodimer.

Functionally, represses the expression of the yvmC-cypX operon, which is involved in pulcherriminic acid biosynthesis. Also negatively regulates yvmA, yvnB and its own expression. Positively regulates yisI expression. Acts by binding specifically to a 14-bp palindromic motif, the YvmB box, which is present in the promoter region of the target genes. The polypeptide is HTH-type transcriptional regulator PchR (Bacillus subtilis (strain 168)).